Reading from the N-terminus, the 570-residue chain is Pantothenate kinase 2, mitochondrial (570 aa).

Residues 1-31 constitute a mitochondrion transit peptide; it reads MRRLGPFHPRVHWAAPPSLSSGLHRLLFLRG. 2 disordered regions span residues 34–94 and 127–198; these read IPSS…PRAR and GRLG…SVSR. The Nucleolar localization signal motif lies at 82-94; it reads RWRNGRGGRPRAR. Residues 84–93 show a composition bias toward basic residues; it reads RNGRGGRPRA. Basic and acidic residues predominate over residues 155-164; the sequence is PEGRRQEPLR. 3 positions are modified to phosphoserine: Ser168, Ser169, and Ser189. Residues 168-179 show a composition bias toward low complexity; the sequence is SSASVPAVGASA. Positions 268 to 275 match the Nuclear export signal motif; the sequence is LELKDLTL. Glu338 serves as the catalytic Proton acceptor. Residues Ser392, Ser395, and Arg407 each contribute to the acetyl-CoA site.

Belongs to the type II pantothenate kinase family. Homodimer. Post-translationally, synthesized as a 62-kDa precursor which is proteolytically processed by the mitochondrial-processing peptidase (MPP) via a 59-kDa intermediate to yield the mature mitochondrial 48-kDa subunit. As to expression, expressed in the brain (at protein level). Ubiquitous. Highly expressed in the testis. Expressed in the umbilical vein endothelial cells (HUVEC).

The protein localises to the mitochondrion. It is found in the mitochondrion intermembrane space. Its subcellular location is the nucleus. The protein resides in the cytoplasm. It catalyses the reaction (R)-pantothenate + ATP = (R)-4'-phosphopantothenate + ADP + H(+). It participates in cofactor biosynthesis; coenzyme A biosynthesis; CoA from (R)-pantothenate: step 1/5. Its activity is regulated as follows. Strongly inhibited by acetyl-CoA and its thioesters. Activated by palmitoylcarnitine. Functionally, mitochondrial isoform that catalyzes the phosphorylation of pantothenate to generate 4'-phosphopantothenate in the first and rate-determining step of coenzyme A (CoA) synthesis. Required for angiogenic activity of umbilical vein of endothelial cells (HUVEC). Cytoplasmic isoform that catalyzes the phosphorylation of pantothenate to generate 4'-phosphopantothenate in the first and rate-determining step of coenzyme A (CoA) synthesis. The chain is Pantothenate kinase 2, mitochondrial (PANK2) from Homo sapiens (Human).